The chain runs to 445 residues: Gasdermin-A (445 aa).

The tract at residues 1 to 251 is triggers pyroptosis; the sequence is MTMFENVTRA…VILIQASDVG (251 aa). 9–13 provides a ligand contact to a cardiolipin; the sequence is RALAR. The next 4 membrane-spanning stretches (beta stranded) occupy residues 78 to 95, 99 to 120, 163 to 179, and 183 to 197; these read NFGF…DVDV, VKVK…TLSV, VTLE…SLPF, and LGLQ…AVTI.

Belongs to the gasdermin family. As to quaternary structure, homooligomer; homooligomeric ring-shaped pore complex containing 18-36 subunits when inserted in the membrane. Post-translationally, cleavage by S.pyogenes SpeB relieves autoinhibition by releasing the N-terminal moiety (Gasdermin-A, N-terminal) that initiates pyroptosis. In terms of processing, palmitoylated. In terms of tissue distribution, expressed predominantly in the gastrointestinal tract and, at a lower level, in the skin. Also detected in mammary gland. In the gastrointestinal tract, mainly expressed in differentiated cells, including the differentiated cell layer of esophagus and mucus-secreting pit cells of the gastric epithelium. Down-regulated in gastric cancer cells.

The protein resides in the cytoplasm. It localises to the perinuclear region. The protein localises to the cytosol. Its subcellular location is the cell membrane. Its activity is regulated as follows. The full-length protein before cleavage is inactive: intramolecular interactions between N- and C-terminal domains mediate autoinhibition in the absence of activation signal. The intrinsic pyroptosis-inducing activity is carried by the released N-terminal moiety (Gasdermin-A, N-terminal) following cleavage by S.pyogenes effector protein SpeB. In terms of biological role, this form constitutes the precursor of the pore-forming protein and acts as a sensor of infection: upon infection by S.pyogenes, specifically cleaved by S.pyogenes effector protein SpeB in epithelial cells, releasing the N-terminal moiety (Gasdermin-A, N-terminal) that binds to membranes and forms pores, triggering pyroptosis. Functionally, pore-forming protein that causes membrane permeabilization and pyroptosis. Released upon cleavage by S.pyogenes effector protein SpeB, and binds to membrane inner leaflet lipids. Homooligomerizes within the membrane and forms pores of 10-15 nanometers (nm) of inner diameter, triggering pyroptosis. Pyroptosis triggers the elimination of the infected skin cell, depriving the pathogen of its protective niche, while inducing an inflammatory response. This ultimately prevents bacterial penetration of the epithelial barrier and a subsequent systemic dissemination of the pathogen. Binds to cardiolipin and other acidic phospholipids, such as phosphatidylserine, which mediate its targeting to the inner leaflet membrane. The chain is Gasdermin-A from Homo sapiens (Human).